The primary structure comprises 338 residues: tRNA N6-adenosine threonylcarbamoyltransferase (338 aa).

Fe cation is bound by residues His110 and His114. Residues 132–136, Asp165, Gly178, and Asn274 contribute to the substrate site; that span reads VLSGG. Asp298 is a Fe cation binding site.

Belongs to the KAE1 / TsaD family. It depends on Fe(2+) as a cofactor.

The protein resides in the cytoplasm. It carries out the reaction L-threonylcarbamoyladenylate + adenosine(37) in tRNA = N(6)-L-threonylcarbamoyladenosine(37) in tRNA + AMP + H(+). In terms of biological role, required for the formation of a threonylcarbamoyl group on adenosine at position 37 (t(6)A37) in tRNAs that read codons beginning with adenine. Is involved in the transfer of the threonylcarbamoyl moiety of threonylcarbamoyl-AMP (TC-AMP) to the N6 group of A37, together with TsaE and TsaB. TsaD likely plays a direct catalytic role in this reaction. This is tRNA N6-adenosine threonylcarbamoyltransferase from Borrelia recurrentis (strain A1).